An 80-amino-acid polypeptide reads, in one-letter code: Large ribosomal subunit protein uL24 (80 aa).

The tract at residues 53–80 (HMKPTQSHPQGSIIEREFPIHASNVKKS) is disordered.

This sequence belongs to the universal ribosomal protein uL24 family. In terms of assembly, part of the 50S ribosomal subunit.

Functionally, one of two assembly initiator proteins, it binds directly to the 5'-end of the 23S rRNA, where it nucleates assembly of the 50S subunit. One of the proteins that surrounds the polypeptide exit tunnel on the outside of the subunit. The sequence is that of Large ribosomal subunit protein uL24 from Chlorobium limicola (strain DSM 245 / NBRC 103803 / 6330).